Here is a 1081-residue protein sequence, read N- to C-terminus: Isoleucine--tRNA ligase (1081 aa).

Positions 53-63 (PFATGLPHYGN) match the 'HIGH' region motif. The 'KMSKS' region motif lies at 607–611 (KMSKS). Lys610 is an ATP binding site.

It belongs to the class-I aminoacyl-tRNA synthetase family.

It catalyses the reaction tRNA(Ile) + L-isoleucine + ATP = L-isoleucyl-tRNA(Ile) + AMP + diphosphate. In Tetrahymena thermophila, this protein is Isoleucine--tRNA ligase (ILSA).